Consider the following 430-residue polypeptide: Serine hydroxymethyltransferase (430 aa).

(6S)-5,6,7,8-tetrahydrofolate is bound at residue 120 to 122; that stretch reads GHI. Lys-226 carries the post-translational modification N6-(pyridoxal phosphate)lysine.

It belongs to the SHMT family. In terms of assembly, homodimer. Requires pyridoxal 5'-phosphate as cofactor.

It localises to the cytoplasm. It functions in the pathway amino-acid biosynthesis; glycine biosynthesis; glycine from L-serine: step 1/1. Its function is as follows. Catalyzes the reversible interconversion of serine and glycine with a modified folate serving as the one-carbon carrier. Also exhibits a pteridine-independent aldolase activity toward beta-hydroxyamino acids, producing glycine and aldehydes, via a retro-aldol mechanism. The sequence is that of Serine hydroxymethyltransferase from Pyrobaculum calidifontis (strain DSM 21063 / JCM 11548 / VA1).